The following is a 506-amino-acid chain: Anaerobic nitric oxide reductase transcription regulator NorR (506 aa).

Asp57 carries the 4-aspartylphosphate modification. One can recognise a Sigma-54 factor interaction domain in the interval 187-416; sequence MIGLSPAMTQ…LEHAIHRAVV (230 aa). Residues 215 to 222 and 278 to 287 each bind ATP; these read GETGTGKE and ADNGTLFLDE. The segment at residues 481-500 is a DNA-binding region (H-T-H motif); it reads WAASARALETDVANLHRLAK.

It participates in nitrogen metabolism; nitric oxide reduction. Its function is as follows. Required for the expression of anaerobic nitric oxide (NO) reductase, acts as a transcriptional activator for at least the norVW operon. Activation also requires sigma-54. The polypeptide is Anaerobic nitric oxide reductase transcription regulator NorR (Salmonella gallinarum (strain 287/91 / NCTC 13346)).